Consider the following 620-residue polypeptide: Glutathione-regulated potassium-efflux system protein KefC (620 aa).

12 consecutive transmembrane segments (helical) span residues 4–24 (HTLLQALIYLGSAALIVPIAV), 26–46 (LGLGSVLGYLIAGCIIGPWGL), 54–74 (SILHFAEIGVVLMLFVIGLEL), 90–110 (GALQMVVCGGLIGLFCMFLGL), 114–134 (VAELIGMTLALSSTAIAMQAM), 149–169 (FAVLLFQDIAAIPLVAMIPLL), 178–198 (LGAFALSALKVAGALALVVLL), 218–238 (VFSAVALFLVFGFGLLLEEVG), 270–290 (GLLLGLFFIGVGMSIDFGTLV), 294–314 (LRILLLLAGFLAIKIVMLWLV), 327–347 (WFAVLLGQGSEFAFVVFGAAQ), and 359–379 (ALTLAVALSMAATPIFLVLLT). The region spanning 399-518 (QPRVIVAGFG…AGVAMPERET (120 aa)) is the RCK N-terminal domain. The disordered stretch occupies residues 599–620 (QGTAEGKHSGEVADEPEVKPSI).

Belongs to the monovalent cation:proton antiporter 2 (CPA2) transporter (TC 2.A.37) family. KefC subfamily. As to quaternary structure, homodimer. Interacts with the regulatory subunit KefF.

It is found in the cell inner membrane. Pore-forming subunit of a potassium efflux system that confers protection against electrophiles. Catalyzes K(+)/H(+) antiport. This Salmonella agona (strain SL483) protein is Glutathione-regulated potassium-efflux system protein KefC.